A 426-amino-acid chain; its full sequence is UDP-N-acetylglucosamine 1-carboxyvinyltransferase (426 aa).

23–24 (KN) lines the phosphoenolpyruvate pocket. Position 99 (arginine 99) interacts with UDP-N-acetyl-alpha-D-glucosamine. The active-site Proton donor is aspartate 123. UDP-N-acetyl-alpha-D-glucosamine is bound by residues aspartate 311 and isoleucine 333.

The protein belongs to the EPSP synthase family. MurA subfamily.

It localises to the cytoplasm. The catalysed reaction is phosphoenolpyruvate + UDP-N-acetyl-alpha-D-glucosamine = UDP-N-acetyl-3-O-(1-carboxyvinyl)-alpha-D-glucosamine + phosphate. It functions in the pathway cell wall biogenesis; peptidoglycan biosynthesis. Cell wall formation. Adds enolpyruvyl to UDP-N-acetylglucosamine. This chain is UDP-N-acetylglucosamine 1-carboxyvinyltransferase, found in Nocardia farcinica (strain IFM 10152).